Consider the following 195-residue polypeptide: C2 domain-containing protein DDB_G0290753 (195 aa).

One can recognise a C2 domain in the interval 38 to 161 (KKLTKETKFE…NIKKYSYTFK (124 aa)). Ca(2+) contacts are provided by aspartate 72, aspartate 78, aspartate 131, aspartate 133, and aspartate 139.

Requires Ca(2+) as cofactor.

This chain is C2 domain-containing protein DDB_G0290753, found in Dictyostelium discoideum (Social amoeba).